Here is a 164-residue protein sequence, read N- to C-terminus: Phosphopantetheine adenylyltransferase (164 aa).

A substrate-binding site is contributed by serine 11. ATP is bound by residues 11–12 (SF) and histidine 19. Substrate-binding residues include lysine 43, alanine 76, and arginine 90. Residues 91 to 93 (GLR), glutamate 101, and 126 to 132 (YQHISSS) contribute to the ATP site.

This sequence belongs to the bacterial CoaD family. In terms of assembly, homohexamer. Mg(2+) is required as a cofactor.

It is found in the cytoplasm. It catalyses the reaction (R)-4'-phosphopantetheine + ATP + H(+) = 3'-dephospho-CoA + diphosphate. Its pathway is cofactor biosynthesis; coenzyme A biosynthesis; CoA from (R)-pantothenate: step 4/5. Its function is as follows. Reversibly transfers an adenylyl group from ATP to 4'-phosphopantetheine, yielding dephospho-CoA (dPCoA) and pyrophosphate. The chain is Phosphopantetheine adenylyltransferase from Streptococcus gordonii (strain Challis / ATCC 35105 / BCRC 15272 / CH1 / DL1 / V288).